We begin with the raw amino-acid sequence, 170 residues long: Putative calmodulin-like protein 6 (170 aa).

4 EF-hand domains span residues 8–43 (QQIS…LGMA), 44–79 (PSQE…KLYE), 84–119 (DDEE…LGEE), and 120–155 (MTED…TWNI). Ca(2+) contacts are provided by aspartate 21, asparagine 23, aspartate 25, cysteine 27, glutamate 32, aspartate 57, aspartate 59, asparagine 61, threonine 63, glutamate 68, aspartate 97, aspartate 99, asparagine 101, glutamate 108, aspartate 133, asparagine 135, aspartate 137, glutamine 139, and glutamate 144.

Belongs to the calmodulin family.

Potential calcium sensor. This chain is Putative calmodulin-like protein 6 (CML6), found in Oryza sativa subsp. japonica (Rice).